A 106-amino-acid polypeptide reads, in one-letter code: ATP-dependent Clp protease adapter protein ClpS (106 aa).

The protein belongs to the ClpS family. In terms of assembly, binds to the N-terminal domain of the chaperone ClpA.

Involved in the modulation of the specificity of the ClpAP-mediated ATP-dependent protein degradation. The protein is ATP-dependent Clp protease adapter protein ClpS of Aliivibrio salmonicida (strain LFI1238) (Vibrio salmonicida (strain LFI1238)).